Here is a 130-residue protein sequence, read N- to C-terminus: Cystatin (130 aa).

A signal peptide spans 1–19 (MEWKIVVPLLAVAFTVANA). The Secondary area of contact signature appears at 67 to 71 (QVVSG). 2 disulfide bridges follow: Cys-85/Cys-94 and Cys-108/Cys-128.

Belongs to the cystatin family. Ubiquitous expression including brain, white muscle, heart, gill, kidney, spleen, liver and skin with the highest and lowest level in brain and gill, respectively.

Its subcellular location is the secreted. Its function is as follows. Cysteine proteinase inhibitor. This is Cystatin from Oncorhynchus keta (Chum salmon).